A 195-amino-acid chain; its full sequence is Antigenic thaumatin-like protein ARB_01183 (195 aa).

The first 22 residues, 1 to 22 (MHSNTAVIALSALAALVPAALA), serve as a signal peptide directing secretion. Cystine bridges form between Cys125-Cys153 and Cys130-Cys137. Positions 171 to 195 (GPKKMFKPVQEKAANRPRHPHARPE) are disordered. Residues 185–195 (NRPRHPHARPE) are compositionally biased toward basic residues.

The protein belongs to the thaumatin family.

It is found in the secreted. Its function is as follows. Might be involved in the inhibition of growth of fungal competitors and pathogenicity. This chain is Antigenic thaumatin-like protein ARB_01183, found in Arthroderma benhamiae (strain ATCC MYA-4681 / CBS 112371) (Trichophyton mentagrophytes).